The following is a 385-amino-acid chain: Probable protein phosphatase 2C 79 (385 aa).

Residues 1–18 (MLSLFFNFLTSCLWPSSS) form the signal peptide. One can recognise a PPM-type phosphatase domain in the interval 47–356 (DFSMAVVQAN…DDITVVVLFL (310 aa)). S76 carries the post-translational modification Phosphoserine. Positions 87, 88, 288, and 347 each coordinate Mn(2+).

This sequence belongs to the PP2C family. Requires Mg(2+) as cofactor. The cofactor is Mn(2+).

The catalysed reaction is O-phospho-L-seryl-[protein] + H2O = L-seryl-[protein] + phosphate. It catalyses the reaction O-phospho-L-threonyl-[protein] + H2O = L-threonyl-[protein] + phosphate. Functionally, may dephosphorylate and repress plasma membrane H(+)-ATPases (PM H(+)-ATPases, e.g. AHA1 and AHA2), thus influencing negatively plant growth and fitness. The chain is Probable protein phosphatase 2C 79 from Arabidopsis thaliana (Mouse-ear cress).